The primary structure comprises 357 residues: Homoserine O-succinyltransferase (357 aa).

Cys146 serves as the catalytic Acyl-thioester intermediate. Residues Lys167 and Ser196 each contribute to the substrate site. His239 (proton acceptor) is an active-site residue. Residue Glu241 is part of the active site. Arg253 serves as a coordination point for substrate.

It belongs to the MetA family.

The protein resides in the cytoplasm. The enzyme catalyses L-homoserine + succinyl-CoA = O-succinyl-L-homoserine + CoA. It participates in amino-acid biosynthesis; L-methionine biosynthesis via de novo pathway; O-succinyl-L-homoserine from L-homoserine: step 1/1. Its function is as follows. Transfers a succinyl group from succinyl-CoA to L-homoserine, forming succinyl-L-homoserine. This Allochromatium vinosum (strain ATCC 17899 / DSM 180 / NBRC 103801 / NCIMB 10441 / D) (Chromatium vinosum) protein is Homoserine O-succinyltransferase.